A 107-amino-acid polypeptide reads, in one-letter code: HTH-type transcriptional regulator Rv2034 (107 aa).

The HTH arsR-type domain maps to 1-93; sequence MSTYRSPDRA…DLDRFWTRAL (93 aa). The H-T-H motif DNA-binding region spans 33–56; the sequence is VGELARDLPVSRPAVSQHLKVLKT.

In terms of assembly, homodimer.

DNA-binding ability is not susceptible to zinc, nickel, cobalt, cadmium, lead, copper and manganese ions. Involved in the regulation of lipid metabolism and hypoxic response. Positively regulates transcription of various genes, such as phoP, groEL2 and dosR. Negatively regulates its own transcription. Acts by binding to a specific palindromic sequence motif in promoter regions. The polypeptide is HTH-type transcriptional regulator Rv2034 (Mycobacterium tuberculosis (strain ATCC 25618 / H37Rv)).